Here is an 806-residue protein sequence, read N- to C-terminus: Mitogen-activated protein kinase 7 (806 aa).

A disordered region spans residues 1–23 (MAEPLKEEDGEDGSGEPPGRVKA). A2 is subject to N-acetylalanine. Residues 2 to 77 (AEPLKEEDGE…VVSSARRRLT (76 aa)) are required for cytoplasmic targeting. In terms of domain architecture, Protein kinase spans 55–347 (YEIIETIGNG…AAAALRHPFL (293 aa)). Residues 61-69 (IGNGAYGVV) and K84 contribute to the ATP site. Residues 78-139 (GQQVAIKKIP…FRSVYVVLDL (62 aa)) are required for binding to MAP2K5. The necessary for oligomerization stretch occupies residues 140–406 (MESDLHQIIH…QQIRFQPSLQ (267 aa)). D182 (proton acceptor) is an active-site residue. Positions 219 to 221 (TEY) match the TXY motif. Residues 407-806 (PVASEPVCPD…LSDLPDLQEP (400 aa)) are may not be required for kinase activity; required to stimulate MEF2C activity. Disordered stretches follow at residues 424 to 473 (APSG…AISD) and 488 to 727 (RSRL…PKGS). Over residues 433–443 (SPPPALPPCSD) the composition is skewed to pro residues. 3 stretches are compositionally biased toward basic and acidic residues: residues 502 to 519 (PEPRKPVTAQERQREREE), 527 to 544 (RAKEREKRRQERERKERG), and 563 to 573 (DNDRSLLERWT). The Nuclear localization signal motif lies at 505–539 (RKPVTAQERQREREEKRRRRQERAKEREKRRQERE). The segment covering 578–592 (PPAPAPAPAPAPAPA) has biased composition (pro residues). Residues 593–603 (PSSAQPTSTPT) show a composition bias toward low complexity. Positions 627 to 643 (VCPPPGPVPQPAGPIPA) are enriched in pro residues. A compositionally biased stretch (polar residues) spans 647-660 (TAPSTSLLASQSLV). The span at 678–689 (PSGPPPPDPGLT) shows a compositional bias: pro residues. A compositionally biased stretch (polar residues) spans 693–710 (STSESPDVNLVTQQLSKS). Position 710 is a phosphoserine (S710). T723 bears the Phosphothreonine mark.

The protein belongs to the protein kinase superfamily. CMGC Ser/Thr protein kinase family. MAP kinase subfamily. In terms of assembly, interacts with MAP2K5. Forms oligomers. Interacts with MEF2A, MEF2C and MEF2D; the interaction phosphorylates the MEF2s and enhances transcriptional activity of MEF2A, MEF2C but not MEF2D. Interacts with SGK1. Interacts with PML. Interacts (via N-terminal half) with HSP90AB1-CDC37 chaperone complex in resting cells; the interaction is MAP2K5-independent and prevents MAPK7 from ubiquitination and proteasomal degradation. Interacts with STUB1/CHIP; the interaction is enhanced in the presence of IGF1 or MAP2K5 and promotes STUB1/CHIP E3 ligase activity. The cofactor is Mg(2+). Post-translationally, dually phosphorylated on Thr-219 and Tyr-221, which activates the enzyme. Detected in testis, brain, kidney, lung and heart. Detected in total embryo (at protein level).

Its subcellular location is the cytoplasm. The protein resides in the nucleus. It is found in the PML body. It catalyses the reaction L-seryl-[protein] + ATP = O-phospho-L-seryl-[protein] + ADP + H(+). The catalysed reaction is L-threonyl-[protein] + ATP = O-phospho-L-threonyl-[protein] + ADP + H(+). Its activity is regulated as follows. Activated by tyrosine and threonine phosphorylation. Activated in response to hyperosmolarity, hydrogen peroxide, and epidermal growth factor (EGF). Its function is as follows. Plays a role in various cellular processes such as proliferation, differentiation and cell survival. The upstream activator of MAPK7 is the MAPK kinase MAP2K5. Upon activation, it translocates to the nucleus and phosphorylates various downstream targets including MEF2C. EGF activates MAPK7 through a Ras-independent and MAP2K5-dependent pathway. As part of the MAPK/ERK signaling pathway, acts as a negative regulator of apoptosis in cardiomyocytes via interaction with STUB1/CHIP and promotion of STUB1-mediated ubiquitination and degradation of ICER-type isoforms of CREM. May have a role in muscle cell differentiation. May be important for endothelial function and maintenance of blood vessel integrity. MAP2K5 and MAPK7 interact specifically with one another and not with MEK1/ERK1 or MEK2/ERK2 pathways. Phosphorylates SGK1 at Ser-78 and this is required for growth factor-induced cell cycle progression. Involved in the regulation of p53/TP53 by disrupting the PML-MDM2 interaction. The sequence is that of Mitogen-activated protein kinase 7 (Mapk7) from Mus musculus (Mouse).